We begin with the raw amino-acid sequence, 86 residues long: Large ribosomal subunit protein uL23 (86 aa).

The protein belongs to the universal ribosomal protein uL23 family. In terms of assembly, part of the 50S ribosomal subunit. Contacts protein L29.

Its function is as follows. Binds to 23S rRNA. One of the proteins that surrounds the polypeptide exit tunnel on the outside of the ribosome. In Thermococcus gammatolerans (strain DSM 15229 / JCM 11827 / EJ3), this protein is Large ribosomal subunit protein uL23.